We begin with the raw amino-acid sequence, 210 residues long: Thymidylate kinase (210 aa).

Residue 10 to 17 (GPEGAGKS) coordinates ATP.

The protein belongs to the thymidylate kinase family.

It catalyses the reaction dTMP + ATP = dTDP + ADP. Its function is as follows. Phosphorylation of dTMP to form dTDP in both de novo and salvage pathways of dTTP synthesis. This Pseudomonas savastanoi pv. phaseolicola (strain 1448A / Race 6) (Pseudomonas syringae pv. phaseolicola (strain 1448A / Race 6)) protein is Thymidylate kinase.